The sequence spans 673 residues: DNA topoisomerase 1 (673 aa).

In terms of domain architecture, Toprim spans 1–134 (MVAEKPKAAA…ARRMKFSTLA (134 aa)). Mg(2+) contacts are provided by Glu4 and Asp103. The Topo IA-type catalytic domain occupies 149–568 (DVEMIEAGMA…MSKKTISKLL (420 aa)). An interaction with DNA region spans residues 189 to 194 (SAGRVQ). Tyr311 functions as the O-(5'-phospho-DNA)-tyrosine intermediate in the catalytic mechanism. The segment at 352–374 (LRPVQGSKDDPAHPAIHPTGEKP) is disordered. The C4-type zinc-finger motif lies at 595–615 (CHLCGRKAVSAVSGYRLCSHH).

This sequence belongs to the type IA topoisomerase family. As to quaternary structure, monomer. It depends on Mg(2+) as a cofactor.

The catalysed reaction is ATP-independent breakage of single-stranded DNA, followed by passage and rejoining.. In terms of biological role, releases the supercoiling and torsional tension of DNA, which is introduced during the DNA replication and transcription, by transiently cleaving and rejoining one strand of the DNA duplex. Introduces a single-strand break via transesterification at a target site in duplex DNA. The scissile phosphodiester is attacked by the catalytic tyrosine of the enzyme, resulting in the formation of a DNA-(5'-phosphotyrosyl)-enzyme intermediate and the expulsion of a 3'-OH DNA strand. The free DNA strand then undergoes passage around the unbroken strand, thus removing DNA supercoils. Finally, in the religation step, the DNA 3'-OH attacks the covalent intermediate to expel the active-site tyrosine and restore the DNA phosphodiester backbone. The protein is DNA topoisomerase 1 of Aeropyrum pernix (strain ATCC 700893 / DSM 11879 / JCM 9820 / NBRC 100138 / K1).